A 454-amino-acid chain; its full sequence is MKETSTFSQKLKQFVLLFFPIFITQMSLFAMSFFDTTMSGHASPIDLAGVAIGTSIWIPVSTGLTGILMATTPIVAQLVGSKKKEDVPQVVIQAVYLAICASFVVMLIGFFAVTPILNGMRLEEPVERIAAQFLSIIAIGIIPLFTYTVLRGFIDALGKTRTTMIITLLSLPINVILNYVLIFGHFGFPKLGGVGAAIASTATYWCILIITVMIIRTKEPFASFHIFKQLYRPSLSSWKEFLKLGVPIGFAIFFETSIFAAVTLMMSNFSTTTIAAHQAAMNFASLLYMTPLSLAMAMTIAVGFEVGAKRYNNAKQYGFIGIGLALAFALLYSILLYFFDDEIASIYTTDIQVHHLAKEFLIFAILFQISDAIATPVQGALRGYKDVNVSLIMTLIAYWVIGLPLGYILATYTDWAAKGYWIGLIIGLAFGATFLLIRLFQVQRKYTIENRRSR.

Helical transmembrane passes span 13-32 (QFVL…FAMS), 47-69 (LAGV…GILM), 90-112 (VVIQ…GFFA), 132-154 (QFLS…RGFI), 166-188 (ITLL…HFGF), 193-215 (GVGA…VMII), 244-266 (LGVP…TLMM), 286-308 (LLYM…EVGA), 317-339 (YGFI…LYFF), 359-381 (EFLI…QGAL), 388-410 (NVSL…YILA), and 420-442 (YWIG…LFQV).

This sequence belongs to the multi antimicrobial extrusion (MATE) (TC 2.A.66.1) family.

Its subcellular location is the cell membrane. Functionally, multidrug efflux pump. The chain is Probable multidrug resistance protein NorM (norM) from Bacillus cereus (strain ATCC 10987 / NRS 248).